The sequence spans 395 residues: uncharacterized protein (395 aa).

Transmembrane regions (helical) follow at residues 19–39 (IGIA…IAII), 49–69 (VLLI…IYEL), 87–107 (LTWI…AVGG), 137–157 (LVII…PLGT), 172–192 (YINL…FYLI), 206–226 (TINI…SLIA), 252–272 (LIGG…MGMG), 279–299 (LFIM…KILA), 311–331 (GLVF…GSLI), and 359–379 (VLCT…GAVI).

The protein belongs to the chloride channel (TC 2.A.49) family.

It is found in the cell membrane. This is an uncharacterized protein from Methanocaldococcus jannaschii (strain ATCC 43067 / DSM 2661 / JAL-1 / JCM 10045 / NBRC 100440) (Methanococcus jannaschii).